A 166-amino-acid chain; its full sequence is Small ribosomal subunit protein uS5 (166 aa).

Residues 11-74 form the S5 DRBM domain; it reads LQEKLISVNR…DKARKNMIII (64 aa).

The protein belongs to the universal ribosomal protein uS5 family. As to quaternary structure, part of the 30S ribosomal subunit. Contacts proteins S4 and S8.

With S4 and S12 plays an important role in translational accuracy. Its function is as follows. Located at the back of the 30S subunit body where it stabilizes the conformation of the head with respect to the body. In Wigglesworthia glossinidia brevipalpis, this protein is Small ribosomal subunit protein uS5.